Here is a 696-residue protein sequence, read N- to C-terminus: Glycine--tRNA ligase beta subunit (696 aa).

It belongs to the class-II aminoacyl-tRNA synthetase family. Tetramer of two alpha and two beta subunits.

It is found in the cytoplasm. The enzyme catalyses tRNA(Gly) + glycine + ATP = glycyl-tRNA(Gly) + AMP + diphosphate. The protein is Glycine--tRNA ligase beta subunit of Methylorubrum extorquens (strain CM4 / NCIMB 13688) (Methylobacterium extorquens).